We begin with the raw amino-acid sequence, 182 residues long: Segregation and condensation protein B (182 aa).

This sequence belongs to the ScpB family. As to quaternary structure, homodimer. Homodimerization may be required to stabilize the binding of ScpA to the Smc head domains. Component of a cohesin-like complex composed of ScpA, ScpB and the Smc homodimer, in which ScpA and ScpB bind to the head domain of Smc. The presence of the three proteins is required for the association of the complex with DNA.

It is found in the cytoplasm. In terms of biological role, participates in chromosomal partition during cell division. May act via the formation of a condensin-like complex containing Smc and ScpA that pull DNA away from mid-cell into both cell halves. The polypeptide is Segregation and condensation protein B (Staphylococcus saprophyticus subsp. saprophyticus (strain ATCC 15305 / DSM 20229 / NCIMB 8711 / NCTC 7292 / S-41)).